The sequence spans 221 residues: Probable N-acetyl-alpha-D-glucosaminyl L-malate deacetylase 2 (221 aa).

Zn(2+) is bound by residues histidine 11, aspartate 14, and histidine 125.

This sequence belongs to the PIGL family. Requires Zn(2+) as cofactor.

It catalyses the reaction (S)-malyl N-acetyl-alpha-D-glucosaminide + H2O = (S)-malyl alpha-D-glucosaminide + acetate. In terms of biological role, involved in bacillithiol (BSH) biosynthesis. Catalyzes the second step of the pathway, the deacetylation of N-acetylglucosaminylmalate (GlcNAc-Mal) to glucosamine malate (GlcN-Mal). In Bacillus subtilis (strain 168), this protein is Probable N-acetyl-alpha-D-glucosaminyl L-malate deacetylase 2.